Here is a 717-residue protein sequence, read N- to C-terminus: Transport/processing ATP-binding protein ComA (717 aa).

In terms of domain architecture, Peptidase C39 spans 11–138; it reads QVDQMDCGVA…EEWTGVTLFM (128 aa). The active site involves C17. Transmembrane regions (helical) follow at residues 18–38, 166–186, 205–225, 237–257, 281–301, 306–326, and 397–417; these read GVAS…LAHL, GLIA…IVGS, LGII…LSYA, LSID…MSFF, STIL…LVLF, NLFF…FAFM, and VAHL…VMDG. In terms of domain architecture, ABC transmembrane type-1 spans 168–450; the sequence is IANIVLATLL…IINLQTKLQT (283 aa). The ABC transporter domain occupies 484–717; that stretch reads MTFKQVHYKY…GGFYAHLVNS (234 aa). 517 to 524 serves as a coordination point for ATP; it reads GISGSGKT.

Belongs to the ABC transporter superfamily. HlyB family.

It is found in the cell membrane. Functionally, required for induction of competence. Seems to transport the competence-stimulating peptide (CSP). In Streptococcus pneumoniae (strain ATCC BAA-255 / R6), this protein is Transport/processing ATP-binding protein ComA (comA).